The primary structure comprises 649 residues: Arylsulfatase (649 aa).

The N-terminal stretch at 1–22 (MLQRLVVALCLLGFAALTAAAA) is a signal peptide. Ca(2+) is bound by residues aspartate 34 and aspartate 35. Asparagine 41 is a glycosylation site (N-linked (GlcNAc...) asparagine). A Ca(2+)-binding site is contributed by cysteine 72. Cysteine 72 serves as the catalytic Nucleophile. At cysteine 72 the chain carries 3-oxoalanine (Cys). 3 N-linked (GlcNAc...) asparagine glycosylation sites follow: asparagine 89, asparagine 224, and asparagine 279. Ca(2+) is bound by residues aspartate 324 and asparagine 325. N-linked (GlcNAc...) asparagine glycosylation is found at asparagine 445, asparagine 489, and asparagine 531.

The protein belongs to the sulfatase family. Requires Ca(2+) as cofactor. In terms of processing, the conversion to 3-oxoalanine (also known as C-formylglycine, FGly), of a serine or cysteine residue in prokaryotes and of a cysteine residue in eukaryotes, is critical for catalytic activity.

The protein resides in the periplasm. It catalyses the reaction an aryl sulfate + H2O = a phenol + sulfate + H(+). With respect to regulation, inhibited by Na(3)BO(3) and KCN. No inhibition by sodium dodecyl sulfate, even at high concentration. In terms of biological role, is commonly produced by soil microorganisms and plays an important role in the mineralization of sulfates. The chain is Arylsulfatase from Volvox carteri (Green alga).